A 207-amino-acid chain; its full sequence is Glutathione S-transferase 3 (207 aa).

A GST N-terminal domain is found at 2 to 79 (VHYKLTYFNA…YLARKFGFVG (78 aa)). Glutathione-binding positions include Tyr-8, Lys-43, 49–51 (GQV), and 63–64 (QS). One can recognise a GST C-terminal domain in the interval 81–207 (TAEEELQADE…WLAKRPETRF (127 aa)).

The protein belongs to the GST superfamily. Sigma family.

The catalysed reaction is RX + glutathione = an S-substituted glutathione + a halide anion + H(+). Conjugation of reduced glutathione to a wide number of exogenous and endogenous hydrophobic electrophiles. This is Glutathione S-transferase 3 (gst-3) from Caenorhabditis elegans.